Here is a 133-residue protein sequence, read N- to C-terminus: Small ribosomal subunit protein uS11 (133 aa).

This sequence belongs to the universal ribosomal protein uS11 family. Part of the 30S ribosomal subunit.

In terms of biological role, located on the platform of the 30S subunit. This is Small ribosomal subunit protein uS11 from Hyperthermus butylicus (strain DSM 5456 / JCM 9403 / PLM1-5).